A 196-amino-acid chain; its full sequence is Regulator of G-protein signaling 1 (196 aa).

The disordered stretch occupies residues 1–27 (MPGMFFSANPKDLKGTDQSLLDDKTQK). The span at 11-25 (KDLKGTDQSLLDDKT) shows a compositional bias: basic and acidic residues. Residues 72 to 187 (SLEKLLANQT…LKSNIYLNLL (116 aa)) enclose the RGS domain.

In terms of assembly, interacts with GNAI1 and GNAQ.

It is found in the cell membrane. The protein localises to the cytoplasm. The protein resides in the cytosol. Functionally, regulates G protein-coupled receptor signaling cascades, including signaling downstream of the N-formylpeptide chemoattractant receptors and leukotriene receptors. Inhibits B cell chemotaxis toward CXCL12. Inhibits signal transduction by increasing the GTPase activity of G protein alpha subunits, thereby driving them into their inactive GDP-bound form. In Equus caballus (Horse), this protein is Regulator of G-protein signaling 1 (RGS1).